Here is a 776-residue protein sequence, read N- to C-terminus: MLQALLTVSLLLSPVPVSAIKELPGVKKYEVVYPIRLHPLHKREVKEPEQQEQFETELKYKMTVNGKIAVLYLKKNKNLLAPGYTETYYNSTGKEITTSPQIMDDCYYQGHIINEKDSDASISTCRGLRGYFSQGNQRYFIEPLSPIHRDGQEHALFKYDPEEKNYDSTCGTDGVLWVHDLQNIARPATRLVKLNDGKVQKHEKYIEYYLVLDNGEFKKYNENQDEIRKRVFEMANYVNMLYKKLNTHVALVGMEIWTDEDKINITPNASFTLENFSKWRGSVLPRRKRHDIAQLITATEFAGMTVGLAFMSTMCSPYHSVGVVQDHSDNLLRVAGTMAHEMGHNFGMFHDNYSCKCPSTICVMDKALSFYIPTDFSSCSRVSYDKFFEDKLSNCLFNAPLPTDIISTPICGNQMVEMGEDCDCGTSEECTNICCDAKTCKIKAGFQCTSGECCEKCQFKKAGMVCRPAKDECDLPEMCDGKSGNCPDDRFRANGFPCHHGKGYCLMGACPTLQEQCTELWGPGTKVADQSCYNRNEGGSKYGYCRRVDDTLIPCKTNDTMCGKLFCQGGSDNLPWKGRIVTFLTCKTFDPEDTSEEIGMVANGTKCGHNKVCINAECVDIEKAYKSTNCSSKCKGHAVCDHELQCQCEEGWSPPDCDDSSVVFYFSIVVAVLFPVAVISLVVAIVIRQQSSREKQKKDQRPLSTTGTRPHKQKRKPQMVKAVQPQEMSQMKLHVYDLPVEGNEPPASFLISKPDFSPPPIPAPRSSSFLDSNPKA.

A signal peptide spans 1-19 (MLQALLTVSLLLSPVPVSA). Positions 20 to 193 (IKELPGVKKY…IARPATRLVK (174 aa)) are excised as a propeptide. A Cysteine switch motif is present at residues 168-175 (STCGTDGV). Position 170 (cysteine 170) interacts with Zn(2+). The Extracellular segment spans residues 194–666 (LNDGKVQKHE…CDDSSVVFYF (473 aa)). The 197-residue stretch at 204 to 400 (KYIEYYLVLD…KLSNCLFNAP (197 aa)) folds into the Peptidase M12B domain. N-linked (GlcNAc...) asparagine glycosylation is found at asparagine 268 and asparagine 275. 4 cysteine pairs are disulfide-bonded: cysteine 315-cysteine 395, cysteine 355-cysteine 379, cysteine 357-cysteine 362, and cysteine 466-cysteine 486. A Zn(2+)-binding site is contributed by histidine 340. Residue glutamate 341 is part of the active site. Histidine 344 and histidine 350 together coordinate Zn(2+). An N-linked (GlcNAc...) asparagine glycan is attached at asparagine 352. The Disintegrin domain occupies 408–494 (TPICGNQMVE…NCPDDRFRAN (87 aa)). Residues asparagine 558, asparagine 603, and asparagine 629 are each glycosylated (N-linked (GlcNAc...) asparagine). Positions 626–658 (KSTNCSSKCKGHAVCDHELQCQCEEGWSPPDCD) constitute an EGF-like domain. 3 disulfides stabilise this stretch: cysteine 630–cysteine 640, cysteine 634–cysteine 646, and cysteine 648–cysteine 657. The chain crosses the membrane as a helical span at residues 667-687 (SIVVAVLFPVAVISLVVAIVI). Topologically, residues 688-776 (RQQSSREKQK…SSFLDSNPKA (89 aa)) are cytoplasmic. Basic and acidic residues predominate over residues 691–701 (SSREKQKKDQR). 2 disordered regions span residues 691-728 (SSRE…PQEM) and 746-776 (PASF…NPKA). The segment covering 709–718 (RPHKQKRKPQ) has biased composition (basic residues).

The cofactor is Zn(2+). Pro-domain removal and maturation may be, at least in part, autocatalytic. As to expression, expressed at high levels in epididymis and at lower levels in lung.

It localises to the membrane. In terms of biological role, may play a role in the adhesive and proteolytic events that occur during lymphocyte emigration or may function in ectodomain shedding of lymphocyte surface target proteins, such as FASL and CD40L. May be involved in sperm maturation. The protein is Disintegrin and metalloproteinase domain-containing protein 28 (ADAM28) of Macaca fascicularis (Crab-eating macaque).